We begin with the raw amino-acid sequence, 201 residues long: LexA repressor (201 aa).

Residues 29 to 49 constitute a DNA-binding region (H-T-H motif); it reads VREICKAVGLSSTSSVHFHLK. Residues serine 125 and lysine 162 each act as for autocatalytic cleavage activity in the active site.

The protein belongs to the peptidase S24 family. Homodimer.

It catalyses the reaction Hydrolysis of Ala-|-Gly bond in repressor LexA.. Represses a number of genes involved in the response to DNA damage (SOS response), including recA and lexA. In the presence of single-stranded DNA, RecA interacts with LexA causing an autocatalytic cleavage which disrupts the DNA-binding part of LexA, leading to derepression of the SOS regulon and eventually DNA repair. This chain is LexA repressor, found in Clostridium botulinum (strain ATCC 19397 / Type A).